Reading from the N-terminus, the 426-residue chain is Inhibin beta A chain (426 aa).

Residues 1–20 (MPLLWLRGFLLASCWIIVRS) form the signal peptide. Residues 21-310 (SPTPGSEGHS…EDHPHRRRRR (290 aa)) constitute a propeptide that is removed on maturation. A glycan (N-linked (GlcNAc...) asparagine) is linked at Asn-165. A disordered region spans residues 259-288 (KKKKKEEEGEGKKKGGGEGGAGADEEKEQS). The segment covering 263–274 (KEEEGEGKKKGG) has biased composition (basic and acidic residues). Intrachain disulfides connect Cys-314–Cys-322, Cys-321–Cys-391, Cys-350–Cys-423, and Cys-354–Cys-425.

This sequence belongs to the TGF-beta family. In terms of assembly, dimeric, linked by one or more disulfide bonds. Inhibin A is a dimer of alpha/INHA and beta-A/INHBA. Activin A is a homodimer of beta-A/INHBA. Activin AB is a dimer of beta-A/INHBA and beta-B/INHBB. Interacts with FST and FSTL3; these interactions prevent activin A interaction to its type II receptor. Activin A interacts with ACVR2A. Activin A interacts with BMPR2. Inhibin A interacts with ACVR1; this interaction creates a non-signaling complex (NSC) that inhibits ACVR1-mediated BMP signaling. Inhibin A interacts with ACVR2A.

The protein localises to the secreted. In terms of biological role, inhibins/activins are involved in regulating a number of diverse functions such as hypothalamic and pituitary hormone secretion, gonadal hormone secretion, germ cell development and maturation, erythroid differentiation, insulin secretion, nerve cell survival, embryonic axial development or bone growth, depending on their subunit composition. Its function is as follows. Activin A is a homodimer of INHBA that plays a role in several essential biological processes including embryonic development, stem cell maintenance and differentiation, haematopoiesis, cell proliferation and tissue fibrosis. Signals through type I (such as ACVR1B or ACVR1C) and type II receptors (such as ACVR2A, ACVR2B or BMPR2) which, upon ligand binding, phosphorylate SMAD2 and SMAD3 intracellular signaling mediators that form a complex with SMAD4, translocate to the nucleus and modulate gene expression. Can also activate alternative non-canonical intracellular signaling pathways including the p38 MAPK, extracellular signal-regulated kinases 1/2 (ERK1/2) and c-Jun N-terminal kinases (JNKs) to modulate cell migration and differentiation. Alternatively, promotes osteoblastic differentiation via ACVRL1-SMAD1/5/9 pathway. In addition, can engage the type I receptor ACVR1 to form an ACVR1-activin A-type II receptor non-signaling complex (NSC) that renders receptors unavailable for engagement with BMPs, hence resulting in an apparent inhibition of ACVR1-mediated BMP signaling. Functionally, inhibin A is a dimer of alpha/INHA and beta-A/INHBA that functions as a feedback regulator in the hypothalamic-pituitary-gonadal (HPG) axis. Inhibits the secretion of FSH from the anterior pituitary gland by acting on pituitary gonadotrope cells. Antagonizes activin A by binding to the proteoglycan, betaglycan, and forming a stable complex with and, thereby, sequestering type II activin receptors while excluding type I receptor. In Homo sapiens (Human), this protein is Inhibin beta A chain (INHBA).